The sequence spans 274 residues: MKKTAIALLAWFVSSASLAATPWQKITHPVPGAAQSIGSFANGCIIGADTLPVQSDNYQVMRTDQRRYFGHPDLVMFIQRLSHQAQQRGLGTVLIGDMGMPAGGRFNGGHASHQTGLDVDIFLQLPKTRWSQAQLLRPQALDLVSRDGKHVVPSRWSSDIASLIKLAAQDNDVTRIFVNPAIKQQLCLDAGSDRDWLRKVRPWFQHRAHMHVRLRCPADSLECEDQPLPPPGDGCGAELQSWFEPPKPGTTKPEKKTPPPLPPSCQALLDEHVL.

The signal sequence occupies residues 1-19 (MKKTAIALLAWFVSSASLA). 3 disulfide bridges follow: Cys-44/Cys-265, Cys-187/Cys-235, and Cys-216/Cys-223. The Zn(2+) site is built by His-110, His-113, Asp-120, Asp-147, His-150, and His-211. The segment at 225–274 (DQPLPPPGDGCGAELQSWFEPPKPGTTKPEKKTPPPLPPSCQALLDEHVL) is disordered.

The protein belongs to the peptidase M74 family. Dimer. Zn(2+) is required as a cofactor.

It localises to the periplasm. Murein endopeptidase that cleaves the D-alanyl-meso-2,6-diamino-pimelyl amide bond that connects peptidoglycan strands. Likely plays a role in the removal of murein from the sacculus. In Salmonella paratyphi A (strain AKU_12601), this protein is Penicillin-insensitive murein endopeptidase.